The primary structure comprises 323 residues: Breast cancer metastasis-suppressor 1-like protein (323 aa).

A compositionally biased stretch (basic and acidic residues) spans 1 to 15; that stretch reads MPVHSREKKENNHDE. Residues 1–56 form a disordered region; sequence MPVHSREKKENNHDEMEVDYGENEGSTSEEEETESSSVSEEGDSSEMDDEDCERRR. Residues 16-51 show a composition bias toward acidic residues; that stretch reads MEVDYGENEGSTSEEEETESSSVSEEGDSSEMDDED. Coiled coils occupy residues 50 to 82 and 147 to 178; these read EDCE…KERL and EKLL…ITSE.

This sequence belongs to the BRMS1 family.

The protein resides in the nucleus. Its function is as follows. Involved in the histone deacetylase (HDAC1)-dependent transcriptional repression activity. The protein is Breast cancer metastasis-suppressor 1-like protein (BRMS1L) of Gallus gallus (Chicken).